The sequence spans 275 residues: 1-deoxy-11-beta-hydroxypentalenate dehydrogenase (275 aa).

Residue 12-36 coordinates NAD(+); the sequence is GAASGIGLALSARFARAGAGVVMAD. A substrate-binding site is contributed by Ser144. Tyr157 functions as the Proton acceptor in the catalytic mechanism. Lys161 lines the NAD(+) pocket.

The protein belongs to the short-chain dehydrogenases/reductases (SDR) family.

It carries out the reaction 1-deoxy-11beta-hydroxypentalenate + NAD(+) = 1-deoxy-11-oxopentalenate + NADH + H(+). Its pathway is antibiotic biosynthesis; pentalenolactone biosynthesis. Its function is as follows. Catalyzes the oxidation of 1-deoxy-11-beta-hydroxypentalenic acid to 1-deoxy-11-oxopentalenic acid in the biosynthesis of pentalenolactone antibiotic. The chain is 1-deoxy-11-beta-hydroxypentalenate dehydrogenase (penF) from Streptomyces exfoliatus (Streptomyces hydrogenans).